A 406-amino-acid polypeptide reads, in one-letter code: Succinylornithine transaminase (406 aa).

Lysine 252 bears the N6-(pyridoxal phosphate)lysine mark.

It belongs to the class-III pyridoxal-phosphate-dependent aminotransferase family. AstC subfamily. Requires pyridoxal 5'-phosphate as cofactor.

It catalyses the reaction N(2)-succinyl-L-ornithine + 2-oxoglutarate = N-succinyl-L-glutamate 5-semialdehyde + L-glutamate. The protein operates within amino-acid degradation; L-arginine degradation via AST pathway; L-glutamate and succinate from L-arginine: step 3/5. Catalyzes the transamination of N(2)-succinylornithine and alpha-ketoglutarate into N(2)-succinylglutamate semialdehyde and glutamate. Can also act as an acetylornithine aminotransferase. The protein is Succinylornithine transaminase of Escherichia coli O157:H7.